Consider the following 449-residue polypeptide: Keratin, type I cuticular Ha7 (449 aa).

The segment at M1–E104 is head. The 312-residue stretch at E104–L415 folds into the IF rod domain. Residues K105–R139 are coil 1A. The interval S140–D150 is linker 1. Residues Y151–S251 form a coil 1B region. Positions Q252–I267 are linker 12. Residues D268 to E411 form a coil 2 region. The segment at P416–R449 is tail.

This sequence belongs to the intermediate filament family.

The polypeptide is Keratin, type I cuticular Ha7 (KRT37) (Homo sapiens (Human)).